A 476-amino-acid chain; its full sequence is Sensor protein CzcS (476 aa).

An N-terminal signal peptide occupies residues 1-35; that stretch reads MRPGTSITPLSLTRRLGLFFALVLSIALASMGAFA. The Periplasmic portion of the chain corresponds to 37–158; that stretch reads YSLAAQLEAR…DRKQVTARFR (122 aa). The chain crosses the membrane as a helical span at residues 159-179; sequence TTLVLGTTVGVILTALVGAAI. Residues 180 to 476 lie on the Cytoplasmic side of the membrane; sequence TRRELEPAHV…RPSQDRPVVG (297 aa). An HAMP domain is found at 181–234; that stretch reads RRELEPAHVLIKQINRISVERLSYRVDMPPKPTEVRDIASAFNAMLQRLEDGYQ. Positions 242 to 455 constitute a Histidine kinase domain; it reads DLAHDLRTPL…TRFTLRFPLN (214 aa). Histidine 245 bears the Phosphohistidine; by autocatalysis mark.

It localises to the cell inner membrane. It carries out the reaction ATP + protein L-histidine = ADP + protein N-phospho-L-histidine.. Functionally, member of the two-component regulatory system CzcS/CzcR involved in the control of cobalt, zinc and cadmium homeostasis. Probably activates CzcR by phosphorylation. The polypeptide is Sensor protein CzcS (czcS) (Cupriavidus metallidurans (strain ATCC 43123 / DSM 2839 / NBRC 102507 / CH34) (Ralstonia metallidurans)).